The chain runs to 115 residues: Large ribosomal subunit protein bL19 (115 aa).

The protein belongs to the bacterial ribosomal protein bL19 family.

In terms of biological role, this protein is located at the 30S-50S ribosomal subunit interface and may play a role in the structure and function of the aminoacyl-tRNA binding site. This Streptococcus gordonii (strain Challis / ATCC 35105 / BCRC 15272 / CH1 / DL1 / V288) protein is Large ribosomal subunit protein bL19.